A 138-amino-acid chain; its full sequence is Large ribosomal subunit protein uL16 (138 aa).

This sequence belongs to the universal ribosomal protein uL16 family. In terms of assembly, part of the 50S ribosomal subunit.

Binds 23S rRNA and is also seen to make contacts with the A and possibly P site tRNAs. This Ureaplasma parvum serovar 3 (strain ATCC 27815 / 27 / NCTC 11736) protein is Large ribosomal subunit protein uL16.